We begin with the raw amino-acid sequence, 497 residues long: Subtilisin-like protease CPC735_031240 (497 aa).

The first 16 residues, 1–16 (MKGVLSLSLLPLLAAP), serve as a signal peptide directing secretion. The propeptide occupies 17–136 (SPILVDTIHR…IEKDSEVHAW (120 aa)). The Inhibitor I9 domain maps to 43–134 (SYIVVFKKNV…QYIEKDSEVH (92 aa)). The Peptidase S8 domain occupies 146–452 (PWGLARVSHR…GGSSNYTAII (307 aa)). Residues Asp-182 and His-214 each act as charge relay system in the active site. N-linked (GlcNAc...) asparagine glycans are attached at residues Asn-244 and Asn-284. Catalysis depends on Ser-380, which acts as the Charge relay system. Asn-447 is a glycosylation site (N-linked (GlcNAc...) asparagine).

The protein belongs to the peptidase S8 family.

Its subcellular location is the secreted. In terms of biological role, secreted subtilisin-like serine protease with keratinolytic activity that contributes to pathogenicity. The protein is Subtilisin-like protease CPC735_031240 of Coccidioides posadasii (strain C735) (Valley fever fungus).